The primary structure comprises 416 residues: Chorismate synthase (416 aa).

Residues arginine 40 and arginine 46 each coordinate NADP(+). FMN is bound by residues 135–137 (RAS), 256–257 (QA), glycine 300, 315–319 (KPIAT), and arginine 341.

Belongs to the chorismate synthase family. Homotetramer. FMNH2 serves as cofactor.

It catalyses the reaction 5-O-(1-carboxyvinyl)-3-phosphoshikimate = chorismate + phosphate. The protein operates within metabolic intermediate biosynthesis; chorismate biosynthesis; chorismate from D-erythrose 4-phosphate and phosphoenolpyruvate: step 7/7. Functionally, catalyzes the anti-1,4-elimination of the C-3 phosphate and the C-6 proR hydrogen from 5-enolpyruvylshikimate-3-phosphate (EPSP) to yield chorismate, which is the branch point compound that serves as the starting substrate for the three terminal pathways of aromatic amino acid biosynthesis. This reaction introduces a second double bond into the aromatic ring system. In Kocuria rhizophila (strain ATCC 9341 / DSM 348 / NBRC 103217 / DC2201), this protein is Chorismate synthase.